We begin with the raw amino-acid sequence, 230 residues long: UPF0502 protein Patl_1161 (230 aa).

This sequence belongs to the UPF0502 family.

The polypeptide is UPF0502 protein Patl_1161 (Pseudoalteromonas atlantica (strain T6c / ATCC BAA-1087)).